The sequence spans 239 residues: Fatty acid metabolism regulator protein (239 aa).

Residues 6–74 (QSPAGFAEEY…HGKPTKVNNF (69 aa)) form the HTH gntR-type domain. The segment at residues 34–53 (ERELSELIGVTRTTLREVLQ) is a DNA-binding region (H-T-H motif).

Homodimer.

It localises to the cytoplasm. Functionally, multifunctional regulator of fatty acid metabolism. This chain is Fatty acid metabolism regulator protein, found in Salmonella paratyphi C (strain RKS4594).